The primary structure comprises 143 residues: Nucleoside diphosphate kinase (143 aa).

ATP is bound by residues Lys11, Phe59, Arg87, Thr93, Arg104, and Asn114. Catalysis depends on His117, which acts as the Pros-phosphohistidine intermediate.

Belongs to the NDK family. Homotetramer. The cofactor is Mg(2+).

The protein localises to the cytoplasm. The catalysed reaction is a 2'-deoxyribonucleoside 5'-diphosphate + ATP = a 2'-deoxyribonucleoside 5'-triphosphate + ADP. It catalyses the reaction a ribonucleoside 5'-diphosphate + ATP = a ribonucleoside 5'-triphosphate + ADP. Functionally, major role in the synthesis of nucleoside triphosphates other than ATP. The ATP gamma phosphate is transferred to the NDP beta phosphate via a ping-pong mechanism, using a phosphorylated active-site intermediate. This chain is Nucleoside diphosphate kinase, found in Ectopseudomonas mendocina (strain ymp) (Pseudomonas mendocina).